A 66-amino-acid chain; its full sequence is MMIPIRCFTCGSLIADKWQPFITRVNAGENPGKVLDDLGVKRYCCRRMLLSHIDIISEVIHYTRPI.

Cysteine 7, cysteine 10, cysteine 44, and cysteine 45 together coordinate Zn(2+).

It belongs to the archaeal Rpo10/eukaryotic RPB10 RNA polymerase subunit family. In terms of assembly, part of the RNA polymerase complex. It depends on Zn(2+) as a cofactor.

It localises to the cytoplasm. It carries out the reaction RNA(n) + a ribonucleoside 5'-triphosphate = RNA(n+1) + diphosphate. Its function is as follows. DNA-dependent RNA polymerase (RNAP) catalyzes the transcription of DNA into RNA using the four ribonucleoside triphosphates as substrates. This chain is DNA-directed RNA polymerase subunit Rpo10, found in Saccharolobus islandicus (strain Y.N.15.51 / Yellowstone #2) (Sulfolobus islandicus).